A 186-amino-acid chain; its full sequence is TATA box-binding protein-like 1 (186 aa).

Belongs to the TBP family.

The protein localises to the cytoplasm. Its subcellular location is the nucleus. In terms of biological role, part of a specialized transcription system that mediates the transcription of most ribosomal proteins through the 5'-TCT-3' motif which is a core promoter element at these genes. Seems to also mediate the transcription of NF1. Does not bind the TATA box. Members of the TBP family are differentially required to regulate transcription and development during early embryogenesis. The protein is TATA box-binding protein-like 1 of Danio rerio (Zebrafish).